We begin with the raw amino-acid sequence, 536 residues long: Lariat debranching enzyme (536 aa).

C8, H10, D39, and N84 together coordinate a divalent metal cation. A lariat recognition loop region spans residues 124–154 (SGIFKSHDYRKGHFECPPYNQQTIRSAYHVR). H174, H226, and H228 together coordinate a divalent metal cation. A disordered region spans residues 388–536 (EEGSVRGEYE…YAAEDEDEAK (149 aa)). The segment covering 414-426 (EYNTDNSGLSSIN) has biased composition (polar residues). The segment covering 430–441 (IMLDDEGGDEDL) has biased composition (acidic residues). Over residues 484 to 504 (ELEKSGVNKQVEEKSLNERPL) the composition is skewed to basic and acidic residues.

The protein belongs to the lariat debranching enzyme family. Requires Fe(2+) as cofactor. It depends on Zn(2+) as a cofactor. The cofactor is Mn(2+).

It localises to the nucleus. With respect to regulation, active in presence of diverse metals including Fe(2+), Zn(2+), Mn(2+). Also activated by Ca(2+). Binds two metal cations in two adjacent alpha and beta metal-binding pockets. Its function is as follows. Cleaves the 2'-5' phosphodiester linkage at the branch point of excised lariat intron RNA and converts them into linear molecules that can be subsequently degraded, thereby facilitating ribonucleotide turnover. Linked to its role in pre-mRNA processing mechanism, may also participate in retrovirus replication and have an antiviral cell-intrinsic defense function. The protein is Lariat debranching enzyme (DBR1) of Gallus gallus (Chicken).